Here is a 958-residue protein sequence, read N- to C-terminus: Protein translocase subunit SecA (958 aa).

Residues Q87, 105–109, and D524 each bind ATP; that span reads GEGKT. The tract at residues 598–617 is disordered; it reads RRIDNQLRGRSGRQGDPGRS. Zn(2+) contacts are provided by C939, C941, C950, and H951.

Belongs to the SecA family. Monomer and homodimer. Part of the essential Sec protein translocation apparatus which comprises SecA, SecYEG and auxiliary proteins SecDF-YajC and YidC. The cofactor is Zn(2+).

It localises to the cell inner membrane. Its subcellular location is the cytoplasm. It catalyses the reaction ATP + H2O + cellular proteinSide 1 = ADP + phosphate + cellular proteinSide 2.. Part of the Sec protein translocase complex. Interacts with the SecYEG preprotein conducting channel. Has a central role in coupling the hydrolysis of ATP to the transfer of proteins into and across the cell membrane, serving both as a receptor for the preprotein-SecB complex and as an ATP-driven molecular motor driving the stepwise translocation of polypeptide chains across the membrane. The protein is Protein translocase subunit SecA of Methylobacterium sp. (strain 4-46).